Consider the following 429-residue polypeptide: Glucose-6-phosphate isomerase (429 aa).

Residue E282 is the Proton donor of the active site. Catalysis depends on residues H303 and K418.

The protein belongs to the GPI family.

It is found in the cytoplasm. It carries out the reaction alpha-D-glucose 6-phosphate = beta-D-fructose 6-phosphate. Its pathway is carbohydrate biosynthesis; gluconeogenesis. It participates in carbohydrate degradation; glycolysis; D-glyceraldehyde 3-phosphate and glycerone phosphate from D-glucose: step 2/4. Its function is as follows. Catalyzes the reversible isomerization of glucose-6-phosphate to fructose-6-phosphate. The sequence is that of Glucose-6-phosphate isomerase from Mesomycoplasma hyopneumoniae (strain 7448) (Mycoplasma hyopneumoniae).